Reading from the N-terminus, the 360-residue chain is 3-dehydroquinate synthase (360 aa).

NAD(+) contacts are provided by residues 71 to 76, 105 to 109, 129 to 130, Lys-142, Lys-151, and 169 to 172; these read DGEQFK, GVIGD, TT, and FLKT. Positions 184, 247, and 264 each coordinate Zn(2+).

This sequence belongs to the sugar phosphate cyclases superfamily. Dehydroquinate synthase family. The cofactor is NAD(+). It depends on Co(2+) as a cofactor. Zn(2+) is required as a cofactor.

It localises to the cytoplasm. It catalyses the reaction 7-phospho-2-dehydro-3-deoxy-D-arabino-heptonate = 3-dehydroquinate + phosphate. The protein operates within metabolic intermediate biosynthesis; chorismate biosynthesis; chorismate from D-erythrose 4-phosphate and phosphoenolpyruvate: step 2/7. Functionally, catalyzes the conversion of 3-deoxy-D-arabino-heptulosonate 7-phosphate (DAHP) to dehydroquinate (DHQ). This chain is 3-dehydroquinate synthase, found in Buchnera aphidicola subsp. Schizaphis graminum (strain Sg).